We begin with the raw amino-acid sequence, 513 residues long: MKNSMNVSEIASIIREKVETFDNPIKRENIGEVISVTDGIALVYGLEKAKFGEKVFFASGVEGIVLDLDHDTAGIVVLGNDRDVKEGDVVKCSGDVVQVPVGHELLGRVVNALGHPMDDGGEIRAKNRMDIESKAPGIIDRKSVHEPLQTGIKIIDLLIPIGRGQRELIIGDRQIGKTTIALDTIINQKKINDEVNENQKVYCVYVAIGQKISTVAKVVNKLKESGALEYTTVVVASASDCAPMQFLAPYAGCTIGEFFRDNGMHCLIIYDDLSKHAVAYRQMSLLLRRPPGREAYPGDIFYVHSRLLERAAKMSDKKGQGSLTALPIVETQAGDVSAYVPTNVISITDGQIFLESELFYKGFRPAVNIGLSVSRVGSAAQLKSVKKVAGSIKLSLAQYRELEDFAKFGSDLDASVQLSLNKGKYLVELLKQKQHLPMSIEEQVVLMYIFSNLYNQLSKIQISYINKFEHDLINYFHTVHPGVLKKLSNDMSDDIKGDIFNIVSNFVTQFNCV.

ATP is bound at residue 171 to 178 (GDRQIGKT).

The protein belongs to the ATPase alpha/beta chains family. In terms of assembly, F-type ATPases have 2 components, CF(1) - the catalytic core - and CF(0) - the membrane proton channel. CF(1) has five subunits: alpha(3), beta(3), gamma(1), delta(1), epsilon(1). CF(0) has three main subunits: a(1), b(2) and c(9-12). The alpha and beta chains form an alternating ring which encloses part of the gamma chain. CF(1) is attached to CF(0) by a central stalk formed by the gamma and epsilon chains, while a peripheral stalk is formed by the delta and b chains.

The protein localises to the cell inner membrane. It carries out the reaction ATP + H2O + 4 H(+)(in) = ADP + phosphate + 5 H(+)(out). Its function is as follows. Produces ATP from ADP in the presence of a proton gradient across the membrane. The alpha chain is a regulatory subunit. This Wolbachia sp. subsp. Drosophila simulans (strain wRi) protein is ATP synthase subunit alpha.